The primary structure comprises 96 residues: uncharacterized protein (96 aa).

It belongs to the NifU family.

This is an uncharacterized protein from Azotobacter vinelandii.